The chain runs to 188 residues: NADH-quinone oxidoreductase subunit B 1 (188 aa).

C32, C33, C98, and C128 together coordinate [4Fe-4S] cluster. Positions 153–188 (VGGVSRPDALASPADALPPRAADSLTAPPVRPPDPS) are disordered. A compositionally biased stretch (low complexity) spans 157–177 (SRPDALASPADALPPRAADSL).

The protein belongs to the complex I 20 kDa subunit family. As to quaternary structure, NDH-1 is composed of 14 different subunits. Subunits NuoB, C, D, E, F, and G constitute the peripheral sector of the complex. The cofactor is [4Fe-4S] cluster.

Its subcellular location is the cell membrane. It catalyses the reaction a quinone + NADH + 5 H(+)(in) = a quinol + NAD(+) + 4 H(+)(out). NDH-1 shuttles electrons from NADH, via FMN and iron-sulfur (Fe-S) centers, to quinones in the respiratory chain. The immediate electron acceptor for the enzyme in this species is believed to be a menaquinone. Couples the redox reaction to proton translocation (for every two electrons transferred, four hydrogen ions are translocated across the cytoplasmic membrane), and thus conserves the redox energy in a proton gradient. This chain is NADH-quinone oxidoreductase subunit B 1 (nuoB1), found in Salinispora tropica (strain ATCC BAA-916 / DSM 44818 / JCM 13857 / NBRC 105044 / CNB-440).